The primary structure comprises 175 residues: Catabolic 3-dehydroquinase (175 aa).

The active-site Proton acceptor is Y26. Substrate contacts are provided by N104, H110, and D117. H130 functions as the Proton donor in the catalytic mechanism. Residues 131-132 (VS) and R141 each bind substrate.

The protein belongs to the type-II 3-dehydroquinase family. In terms of assembly, homododecamer. Adopts a ring-like structure, composed of an arrangement of two hexameric rings stacked on top of one another.

The catalysed reaction is 3-dehydroquinate = 3-dehydroshikimate + H2O. It functions in the pathway aromatic compound metabolism; 3,4-dihydroxybenzoate biosynthesis; 3,4-dihydroxybenzoate from 3-dehydroquinate: step 1/2. In terms of biological role, is involved in the catabolism of quinate. Allows the utilization of quinate as carbon source via the beta-ketoadipate pathway. The protein is Catabolic 3-dehydroquinase of Sordaria macrospora (strain ATCC MYA-333 / DSM 997 / K(L3346) / K-hell).